Here is a 1128-residue protein sequence, read N- to C-terminus: Apoptosis-stimulating of p53 protein 2 (1128 aa).

The interval 85–120 (PPNRDIVSGPRSQDPSVKRNGVKVPGEHRRKENGVN) is disordered. Residues 332-348 (NLPQQAVSAPSRVAAVG) form an interaction with APPBP1 region. Positions 393–436 (MRSGAASQSKGSKAHPASPDWNPSNADLLPSQGSSVPQSAGTAL) are disordered. Positions 413 to 433 (WNPSNADLLPSQGSSVPQSAG) are enriched in polar residues. 5 positions are modified to phosphoserine: serine 479, serine 555, serine 568, serine 571, and serine 575. Disordered regions lie at residues 549–596 (QARM…FPPA) and 654–705 (NPQQ…LPFL). Residues 562-574 (GQDQVLSPASKQE) are compositionally biased toward polar residues. The segment covering 654-669 (NPQQHPENIYSCSQGK) has biased composition (polar residues). The segment covering 684-693 (HESHENERIP) has biased composition (basic and acidic residues). 3 positions are modified to phosphoserine: serine 697, serine 713, and serine 736. 3 disordered regions span residues 723-748 (KLSN…GPNI), 802-824 (SLVP…SDVP), and 870-907 (PPPP…KRTN). The short motif at 866-875 (YPPYPPPPYP) is the SH3-binding element. The tract at residues 876–1128 (SGEPEVSEED…RIKPRQRSLA (253 aa)) is mediates interaction with APC2. ANK repeat units follow at residues 958 to 987 (EGIT…NVNA) and 991 to 1020 (DGWT…AVFA). The region spanning 1057–1119 (MNKGVIYALW…PRNLLGLYPR (63 aa)) is the SH3 domain.

The protein belongs to the ASPP family. Interacts with P53/TP53; the interaction promotes pro-apoptotic activity. Interacts with BCL2. Interacts with protein phosphatase 1. Interacts with RELA NF-kappa-B subunit. This interaction probably prevents the activation of apoptosis, possibly by preventing its interaction with p53/TP53. Interacts with APC2 and APPBP1. Interacts with DDX42 (via the C-terminus); the interaction is not inhibited by TP53BP2 ubiquitination and is independent of p53/TP53.

Its subcellular location is the cytoplasm. It localises to the perinuclear region. The protein resides in the nucleus. Regulator that plays a central role in regulation of apoptosis and cell growth via its interactions with proteins such as TP53. Regulates p53/TP53 by enhancing the DNA binding and transactivation function of p53/TP53 on the promoters of proapoptotic genes in vivo. Inhibits the ability of APPBP1 to conjugate NEDD8 to CUL1, and thereby decreases APPBP1 ability to induce apoptosis. Impedes cell cycle progression at G2/M. Its apoptosis-stimulating activity is inhibited by its interaction with DDX42. In Mus musculus (Mouse), this protein is Apoptosis-stimulating of p53 protein 2 (Tp53bp2).